The following is a 632-amino-acid chain: Probable potassium transport system protein Kup (632 aa).

A run of 12 helical transmembrane segments spans residues 17–37 (LFYL…TSPL), 60–80 (LISL…VLFL), 106–126 (TAIL…DAMI), 146–166 (LSEY…VVQS), 175–195 (FFGP…ISHI), 210–230 (AVSF…AVFL), 254–274 (WFLL…ALVL), 292–312 (ALLP…QAVI), 344–364 (IFVP…VLSF), 370–390 (LATA…IMAF), 401–421 (LPVA…FLGA), and 426–446 (IHDG…IMWT).

The protein belongs to the HAK/KUP transporter (TC 2.A.72) family.

It localises to the cell inner membrane. It catalyses the reaction K(+)(in) + H(+)(in) = K(+)(out) + H(+)(out). Its function is as follows. Transport of potassium into the cell. Likely operates as a K(+):H(+) symporter. This Rhizobium rhizogenes (Agrobacterium rhizogenes) protein is Probable potassium transport system protein Kup.